The sequence spans 256 residues: Ubiquinone/menaquinone biosynthesis C-methyltransferase UbiE (256 aa).

S-adenosyl-L-methionine-binding positions include T79, D100, and 128-129; that span reads DA.

Belongs to the class I-like SAM-binding methyltransferase superfamily. MenG/UbiE family.

It carries out the reaction a 2-demethylmenaquinol + S-adenosyl-L-methionine = a menaquinol + S-adenosyl-L-homocysteine + H(+). It catalyses the reaction a 2-methoxy-6-(all-trans-polyprenyl)benzene-1,4-diol + S-adenosyl-L-methionine = a 5-methoxy-2-methyl-3-(all-trans-polyprenyl)benzene-1,4-diol + S-adenosyl-L-homocysteine + H(+). Its pathway is quinol/quinone metabolism; menaquinone biosynthesis; menaquinol from 1,4-dihydroxy-2-naphthoate: step 2/2. The protein operates within cofactor biosynthesis; ubiquinone biosynthesis. Functionally, methyltransferase required for the conversion of demethylmenaquinol (DMKH2) to menaquinol (MKH2) and the conversion of 2-polyprenyl-6-methoxy-1,4-benzoquinol (DDMQH2) to 2-polyprenyl-3-methyl-6-methoxy-1,4-benzoquinol (DMQH2). This is Ubiquinone/menaquinone biosynthesis C-methyltransferase UbiE from Ectopseudomonas mendocina (strain ymp) (Pseudomonas mendocina).